The sequence spans 511 residues: 2'-acyl-2-O-sulfo-trehalose (hydroxy)phthioceranyltransferase PapA1 (511 aa).

The protein belongs to the PapA acyltransferase family.

It catalyses the reaction a (hydroxy)phthioceranyl-[(hydroxy)phthioceranic acid synthase] + 2'-palmitoyl/stearoyl-2-O-sulfo-alpha,alpha-trehalose = a 3'-(hydroxy)phthioceranyl-2'-palmitoyl/stearoyl-2-O-sulfo-alpha,alpha-trehalose + holo-[(hydroxy)phthioceranic acid synthase].. Its function is as follows. Required for the biosynthesis of sulfolipid-1 (SL-1), a major mycobacterial cell wall lipid. Catalyzes the acylation of trehalose-2-sulfate-2'-palmitate (SL659) by adding the (hydroxy)phthioceranoyl group at the 3'-position to yield the diacylated intermediate 2-palmitoyl-3-(C43)-phthioceranyl-alpha, alpha'-D-trehalose-2'-sulfate (SL1278). In Mycobacterium tuberculosis (strain CDC 1551 / Oshkosh), this protein is 2'-acyl-2-O-sulfo-trehalose (hydroxy)phthioceranyltransferase PapA1 (papA1).